The following is a 725-amino-acid chain: Catalase-peroxidase (725 aa).

Residues 88-211 (WHSAGTYRIQ…LAASEMGLIY (124 aa)) constitute a cross-link (tryptophyl-tyrosyl-methioninium (Trp-Tyr) (with M-237)). His89 acts as the Proton acceptor in catalysis. A cross-link (tryptophyl-tyrosyl-methioninium (Tyr-Met) (with W-88)) is located at residues 211 to 237 (YVNPEGPGREPDPLKAAQQIRETFKRM). Residue His252 coordinates heme b.

This sequence belongs to the peroxidase family. Peroxidase/catalase subfamily. In terms of assembly, homodimer or homotetramer. The cofactor is heme b. In terms of processing, formation of the three residue Trp-Tyr-Met cross-link is important for the catalase, but not the peroxidase activity of the enzyme.

The catalysed reaction is H2O2 + AH2 = A + 2 H2O. It carries out the reaction 2 H2O2 = O2 + 2 H2O. Bifunctional enzyme with both catalase and broad-spectrum peroxidase activity. The protein is Catalase-peroxidase of Symbiobacterium thermophilum (strain DSM 24528 / JCM 14929 / IAM 14863 / T).